The following is a 515-amino-acid chain: MKKKILLMMSLISVFFAWQLTQAKQVLAEGKVKVVTTFYPVYEFTKGIVGNDGDVSMLMKAGTEPHDFEPSTKDIKKIQDADAFVYMDDNMETWVSDVKKSLTSKKVTIVKGTGNMLLVAGVGHDHHHEEADKKHEHNKHSEEGHNHAFDPHVWLSPYRSITVVENIRDSLSKAYPEKAENFKANAATYIEKLKELDKDYTAALSDAKQKSFVTQHAAFGYMALDYGLNQISINGVIPDAEPSAKRIATLSKYVKKYGIKYIYFEENASSKVAKTLAKEAGVKAAVLSPLEGLTEKEMKAGQDYFTVMRKNLETLRLTTDVAGKEILPEKDTTKTVYNGYFKDKEVKDRQLSDWSGSWQSVYPYLQDGTLDQVWDYKAKKSKGKMTAAEYKDYYTTGYKTDVEQIKINGKKKTMTFVRNGEKKTFTYTYAGKEILTYPKGNRGVRFMFEAKEPNAGEFKYVQFSDHAIAPEKAEHFHLYWGGDSQEKLHKELEHWPTYYGSDLSGREIAQEINAH.

The signal sequence occupies residues 1-28 (MKKKILLMMSLISVFFAWQLTQAKQVLA). Histidine 66 is a Zn(2+) binding site. Positions 126–148 (HHHEEADKKHEHNKHSEEGHNHA) are disordered. Positions 129–148 (EEADKKHEHNKHSEEGHNHA) are his-rich loop. 3 residues coordinate Zn(2+): histidine 152, histidine 216, and glutamate 291.

Belongs to the bacterial solute-binding protein 9 family.

Functionally, part of the ATP-binding cassette (ABC) transport system AdcABC involved in zinc import. Binds zinc with high affinity and specificity and delivers it to the membrane permease for translocation into the cytoplasm. The chain is Zinc-binding protein AdcA (adcA) from Streptococcus pyogenes serotype M3 (strain ATCC BAA-595 / MGAS315).